The primary structure comprises 537 residues: Immunoglobulin-like domain-containing receptor 1 (537 aa).

An N-terminal signal peptide occupies residues 1-22 (MGCGLLAAGLLLFTWLPAGCLS). One can recognise an Ig-like V-type domain in the interval 23–161 (LLVTVQHTER…TSGDPDKEVK (139 aa)). Residues 23–166 (LLVTVQHTER…DKEVKLIVLH (144 aa)) lie on the Extracellular side of the membrane. C44 and C144 are joined by a disulfide. Residues 167–187 (WLTVIFIILGALLLLLLIGVC) form a helical membrane-spanning segment. The Cytoplasmic portion of the chain corresponds to 188 to 537 (WCQCCPQYCC…SSHSGRSVVI (350 aa)). The tract at residues 333 to 537 (PPLIRDPPSS…SSHSGRSVVI (205 aa)) is disordered. Polar residues predominate over residues 341–357 (SSRTSNPSHQQRLNAVS). Basic and acidic residues-rich tracts occupy residues 359–380 (RHCD…RELQ) and 434–444 (RRPEPREGAQR). Positions 480-490 (QRRHHHRRRRS) are enriched in basic residues. Phosphoserine occurs at positions 490 and 492. The segment covering 518 to 530 (GNVERRLERESSH) has biased composition (basic and acidic residues).

The protein belongs to the immunoglobulin superfamily. LISCH7 family. In terms of assembly, homooligomer. Interacts with MARVELD2 and OCLN; the interaction is required to recruit MARVELD2 to tricellular contacts. Interacts (via C-terminus) with TRA2A, TRA2B and SRSF1. Interacts with PLSCR1. Expressed in the vestibule and in hair cells and supporting cells of the cochlea. Expressed in epithelial tissues. Highly expressed in colon but also detected in small intestine, bladder and lung. In colon, expressed in the upper portion of the crypts (at protein level). Expressed in CCK secretory cells of the proximal small intestine (at protein level). Expressed in the organ of Corti, stria vascularis, utricle and saccule of the inner ear.

It localises to the cell membrane. The protein localises to the cell junction. Its subcellular location is the tight junction. The protein resides in the nucleus. It is found in the cytoplasm. In terms of biological role, maintains epithelial barrier function by recruiting MARVELD2/tricellulin to tricellular tight junctions (tTJs). Crucial for normal hearing by maintaining the structural and functional integrity of tTJs, which are critical for the survival of auditory neurosensory HCs. Mediates fatty acids and lipoproteins-stimulated CCK/cholecystokinin secretion in the small intestine. In the inner ear, may regulate alternative pre-mRNA splicing via binding to TRA2A, TRA2B and SRSF1. The protein is Immunoglobulin-like domain-containing receptor 1 of Mus musculus (Mouse).